Reading from the N-terminus, the 167-residue chain is Crossover junction endodeoxyribonuclease RuvC (167 aa).

Active-site residues include Asp14, Glu75, and Asp147. Residues Asp14, Glu75, and Asp147 each coordinate Mg(2+).

It belongs to the RuvC family. In terms of assembly, homodimer which binds Holliday junction (HJ) DNA. The HJ becomes 2-fold symmetrical on binding to RuvC with unstacked arms; it has a different conformation from HJ DNA in complex with RuvA. In the full resolvosome a probable DNA-RuvA(4)-RuvB(12)-RuvC(2) complex forms which resolves the HJ. Mg(2+) serves as cofactor.

The protein resides in the cytoplasm. The enzyme catalyses Endonucleolytic cleavage at a junction such as a reciprocal single-stranded crossover between two homologous DNA duplexes (Holliday junction).. Its function is as follows. The RuvA-RuvB-RuvC complex processes Holliday junction (HJ) DNA during genetic recombination and DNA repair. Endonuclease that resolves HJ intermediates. Cleaves cruciform DNA by making single-stranded nicks across the HJ at symmetrical positions within the homologous arms, yielding a 5'-phosphate and a 3'-hydroxyl group; requires a central core of homology in the junction. The consensus cleavage sequence is 5'-(A/T)TT(C/G)-3'. Cleavage occurs on the 3'-side of the TT dinucleotide at the point of strand exchange. HJ branch migration catalyzed by RuvA-RuvB allows RuvC to scan DNA until it finds its consensus sequence, where it cleaves and resolves the cruciform DNA. The sequence is that of Crossover junction endodeoxyribonuclease RuvC from Synechocystis sp. (strain ATCC 27184 / PCC 6803 / Kazusa).